The primary structure comprises 533 residues: Cytochrome P450 monooxygenase calL (533 aa).

Residues 8-28 (TQLALLVWGIAVCVTLAIVVP) form a helical membrane-spanning segment. Residue N33 is glycosylated (N-linked (GlcNAc...) asparagine). Residues 123-148 (GKFKQDQSGRSKNPVPGHDVKPGQPR) are disordered. N-linked (GlcNAc...) asparagine glycosylation is present at N388. C467 lines the heme pocket.

The protein belongs to the cytochrome P450 family. It depends on heme as a cofactor.

It localises to the membrane. Its pathway is secondary metabolite biosynthesis. Functionally, cytochrome P450 monooxygenase; part of the gene cluster that mediates the biosynthesis of calbistrin A and related compounds. Calbistrin A is a secondary metabolite with an interesting structure that was recently found to have bioactivity against leukemia cells. It consists of two polyketides linked by an ester bond: a bicyclic decalin containing polyketide and a linear 12 carbon dioic acid structure. The polyketide synthase calA is probably responsible for forming the decalin moiety. Because calA lacks a designated enoylreductase (ER) domain, the required activity is provided by the trans-enoyl reductase calK. Following release from the PKS, calF then probably catalyzes the oxidation and the subsequent Diels Alder cycloisomerization that lead to the formation of the decalin moiety. The decalin polyketide backbone includes two C-methyl groups, at C7 and C11 in backbone, of which the C7 position is probably methylated by the methyltransferase domain of calA. A candidate for adding the methyl group at C11, if not done by CalA, is the cluster methyltransferase calH. Several additional tailoring enzymes within the cluster could be involved in the modification of the decalin polyketide product. Those include the 3 cytochrome P450 monooxygenases CalE, CalG and CalL, of which one might be responsible for the introduction of the extra hydroxyl group attached to the backbone of the decalin moiety, at position C9 in the backbone, that allows for attachment of the linear moiety. One tailoring enzyme activity that is expected to be involved in biosynthesis of calbistrin is an acyltransferase for connecting the two polyketide synthase products, and which could be performed by the cluster acyltransferase calJ. The enzyme responsible for the biosynthesis of the linear moiety, probably a second PKS, has not been identified yet. This is Cytochrome P450 monooxygenase calL from Penicillium decumbens.